Consider the following 253-residue polypeptide: Ribonuclease HII (253 aa).

The 184-residue stretch at 70–253 folds into the RNase H type-2 domain; sequence NLIAGIDEVG…KSFEPIKSML (184 aa). A divalent metal cation-binding residues include Asp76, Glu77, and Asp168.

It belongs to the RNase HII family. Mn(2+) serves as cofactor. Requires Mg(2+) as cofactor.

The protein localises to the cytoplasm. It catalyses the reaction Endonucleolytic cleavage to 5'-phosphomonoester.. Endonuclease that specifically degrades the RNA of RNA-DNA hybrids. The chain is Ribonuclease HII from Streptococcus agalactiae serotype Ia (strain ATCC 27591 / A909 / CDC SS700).